The primary structure comprises 446 residues: Phosphoglucosamine mutase (446 aa).

The Phosphoserine intermediate role is filled by serine 99. 4 residues coordinate Mg(2+): serine 99, aspartate 242, aspartate 244, and aspartate 246. Residue serine 99 is modified to Phosphoserine.

The protein belongs to the phosphohexose mutase family. Mg(2+) serves as cofactor. In terms of processing, activated by phosphorylation.

The catalysed reaction is alpha-D-glucosamine 1-phosphate = D-glucosamine 6-phosphate. Its function is as follows. Catalyzes the conversion of glucosamine-6-phosphate to glucosamine-1-phosphate. The chain is Phosphoglucosamine mutase from Campylobacter concisus (strain 13826).